The primary structure comprises 357 residues: uncharacterized protein (357 aa).

The 170-residue stretch at 27-196 (LVCEGGGQRG…SDAIPVKEAA (170 aa)) folds into the PNPLA domain. A GXGXXG motif is present at residues 31–36 (GGGQRG). A GXSXG motif is present at residues 59–63 (GTSAG). Ser61 serves as the catalytic Nucleophile. Asp183 serves as the catalytic Proton acceptor. The DGA/G signature appears at 183 to 185 (DGG).

Probable lipid hydrolase. This is an uncharacterized protein from Escherichia coli (strain K12).